Consider the following 890-residue polypeptide: Translation initiation factor IF-2 (890 aa).

A disordered region spans residues 45 to 304 (LIDHLNQKNS…LQQGFQKPAQ (260 aa)). Residues 67 to 81 (STLNIPGTGGKSKSV) show a composition bias toward polar residues. Over residues 92–217 (VKRDPQEAER…RMAEENKWTD (126 aa)) the composition is skewed to basic and acidic residues. Over residues 252-266 (GRGRNAKAARPKKGN) the composition is skewed to basic residues. Residues 267 to 280 (KHSESKADREEARA) show a composition bias toward basic and acidic residues. The tr-type G domain occupies 389 to 558 (PRAPVVTIMG…LLQAEVLELK (170 aa)). A G1 region spans residues 398-405 (GHVDHGKT). A GTP-binding site is contributed by 398-405 (GHVDHGKT). Residues 423 to 427 (GITQH) are G2. A G3 region spans residues 444–447 (DTPG). GTP-binding positions include 444 to 448 (DTPGH) and 498 to 501 (NKID). The segment at 498 to 501 (NKID) is G4. Residues 534–536 (SAK) are G5. Position 808 is an N6-acetyllysine (Lys808).

Belongs to the TRAFAC class translation factor GTPase superfamily. Classic translation factor GTPase family. IF-2 subfamily.

The protein resides in the cytoplasm. Its function is as follows. One of the essential components for the initiation of protein synthesis. Protects formylmethionyl-tRNA from spontaneous hydrolysis and promotes its binding to the 30S ribosomal subunits. Also involved in the hydrolysis of GTP during the formation of the 70S ribosomal complex. The chain is Translation initiation factor IF-2 from Escherichia fergusonii (strain ATCC 35469 / DSM 13698 / CCUG 18766 / IAM 14443 / JCM 21226 / LMG 7866 / NBRC 102419 / NCTC 12128 / CDC 0568-73).